Reading from the N-terminus, the 443-residue chain is MKTVVWQSLSENQQESLLQRPAITEGANITAIVADVVADVRQRGDEALLELTEKFDRVRPDSIRVSEQEVTAATSRLSDNMKQALQQAYQNIATFHKAQKTKPLRVETQPGVVCEQVTRPINSVGLYIPGGSAPLPSTVLMLGVPAQIAGCRQVVLCSPPPIADEILYVAQLCGITEIYNIGGSQAIAAMAYGTKSVARVDKIFGPGNAFVTEAKRQVSNDFRGAAIDMPAGPSEVLVIADKTADPDFIAADLLSQAEHGPDSQVILLTPEPSIADRVADAIQLQLKVLPRADIARQALGSSILIVTETISQCISISNHYGPEHLIVQTREPRELVPLLDNAGSIFLGDWSPESVGDYASGTNHVLPTYGYTRTYSSLGLADFSKRMTVQELTADGLKILAPTVVTMAEAEGLDAHKRAVTIRIEKLQQQEILKAQQVEEKEA.

Tyrosine 127, glutamine 185, and asparagine 208 together coordinate NAD(+). Substrate-binding residues include serine 234, glutamine 256, and histidine 259. Zn(2+) is bound by residues glutamine 256 and histidine 259. Active-site proton acceptor residues include glutamate 323 and histidine 324. Substrate is bound by residues histidine 324, aspartate 357, glutamate 411, and histidine 416. Position 357 (aspartate 357) interacts with Zn(2+). Residue histidine 416 coordinates Zn(2+).

Belongs to the histidinol dehydrogenase family. Zn(2+) serves as cofactor.

The catalysed reaction is L-histidinol + 2 NAD(+) + H2O = L-histidine + 2 NADH + 3 H(+). It functions in the pathway amino-acid biosynthesis; L-histidine biosynthesis; L-histidine from 5-phospho-alpha-D-ribose 1-diphosphate: step 9/9. Its function is as follows. Catalyzes the sequential NAD-dependent oxidations of L-histidinol to L-histidinaldehyde and then to L-histidine. This Photobacterium profundum (strain SS9) protein is Histidinol dehydrogenase.